Consider the following 129-residue polypeptide: Glycine cleavage system H protein (129 aa).

The Lipoyl-binding domain maps to 24-106 (SYTVGITEHA…YGEGWFFRVM (83 aa)). Position 65 is an N6-lipoyllysine (K65).

The protein belongs to the GcvH family. The glycine cleavage system is composed of four proteins: P, T, L and H. The cofactor is (R)-lipoate.

In terms of biological role, the glycine cleavage system catalyzes the degradation of glycine. The H protein shuttles the methylamine group of glycine from the P protein to the T protein. The chain is Glycine cleavage system H protein from Shewanella putrefaciens (strain CN-32 / ATCC BAA-453).